The chain runs to 369 residues: MVGCAEYKNAPMKLPKEVAQELAETAKKLVAAGKGILAADESTQTIKKRFDNIKIENTVENRASYRDLLFGTKGLGKFISGAILFEETLFQKNEAGVPLVNLLHDEGIIPGIKVDKGLVSIPCTDDEKSTQGLDGLAERCKEYYKAGARFAKWRAVLVIDPAKGKPTDLSIQEVSWGLARYASICQQNKLVPIVEPEILADGAHTIEVCATVTQKVLASVFKALHDNGVLLEGALLKPNMVTAGYDCTEKTKTDDIGFFTVRTLRRTVPPALPGVVFLSGGQSEEDASINLNSINVLGPHPWALTFSYGRALQASVLNTWQGKKENVAKARAVLLQRAEANSLATYGKYKGGAGGSTAGASLYEKKYVY.

Residue aspartate 40 participates in dihydroxyacetone phosphate binding. Positions 42 and 45 each coordinate D-glyceraldehyde 3-phosphate. Arginine 49 lines the beta-D-fructose 1,6-bisphosphate pocket. Residue lysine 113 coordinates D-glyceraldehyde 3-phosphate. Lysine 152 lines the dihydroxyacetone phosphate pocket. Glutamate 195 is a D-glyceraldehyde 3-phosphate binding site. The active-site Proton acceptor is the glutamate 195. Dihydroxyacetone phosphate is bound by residues lysine 237, serine 279, and glycine 280. Catalysis depends on lysine 237, which acts as the Schiff-base intermediate with dihydroxyacetone phosphate. Residues 279 to 281 (SGG) and serine 307 each bind beta-D-fructose 1,6-bisphosphate. Positions 309 and 310 each coordinate dihydroxyacetone phosphate. Beta-D-fructose 1,6-bisphosphate is bound at residue arginine 310.

Belongs to the class I fructose-bisphosphate aldolase family.

The protein localises to the cytoplasm. Its subcellular location is the membrane. It is found in the host cell membrane. The enzyme catalyses beta-D-fructose 1,6-bisphosphate = D-glyceraldehyde 3-phosphate + dihydroxyacetone phosphate. It participates in carbohydrate degradation; glycolysis; D-glyceraldehyde 3-phosphate and glycerone phosphate from D-glucose: step 4/4. Its function is as follows. Plays a key role in glycolysis by catalyzing the cleavage of fructose 1,6-bisphosphate into dihydroxyacetone phosphate and glyceraldehyde 3-phosphate. This is Fructose-bisphosphate aldolase 2 (ALDO2) from Plasmodium berghei (strain Anka).